A 468-amino-acid chain; its full sequence is Dimethylamine methyltransferase MtbB1 (468 aa).

A non-standard amino acid (pyrrolysine) is located at residue Pyl-356.

The protein belongs to the dimethylamine methyltransferase family.

The enzyme catalyses Co(I)-[dimethylamine-specific corrinoid protein] + dimethylamine + H(+) = methyl-Co(III)-[dimethylamine-specific corrinoid protein] + methylamine. The protein operates within one-carbon metabolism; methanogenesis from dimethylamine. Catalyzes the transfer of a methyl group from dimethylamine to the corrinoid cofactor of MtbC. The sequence is that of Dimethylamine methyltransferase MtbB1 (mtbB1) from Methanosarcina mazei (strain ATCC BAA-159 / DSM 3647 / Goe1 / Go1 / JCM 11833 / OCM 88) (Methanosarcina frisia).